The chain runs to 444 residues: Adenylosuccinate synthetase (444 aa).

GTP-binding positions include 19–25 (GDEGKGK) and 47–49 (GHT). The active-site Proton acceptor is the Asp20. Residues Asp20 and Gly47 each contribute to the Mg(2+) site. Residues 20 to 23 (DEGK), 45 to 48 (NAGH), Thr139, Arg153, Gln234, Thr249, and Arg317 each bind IMP. His48 acts as the Proton donor in catalysis. Residue 313–319 (TVTGRPR) coordinates substrate. GTP is bound by residues Arg319, 345–347 (KLD), and 427–429 (STG).

This sequence belongs to the adenylosuccinate synthetase family. In terms of assembly, homodimer. Mg(2+) serves as cofactor.

It is found in the cytoplasm. The catalysed reaction is IMP + L-aspartate + GTP = N(6)-(1,2-dicarboxyethyl)-AMP + GDP + phosphate + 2 H(+). It participates in purine metabolism; AMP biosynthesis via de novo pathway; AMP from IMP: step 1/2. In terms of biological role, plays an important role in the de novo pathway of purine nucleotide biosynthesis. Catalyzes the first committed step in the biosynthesis of AMP from IMP. This chain is Adenylosuccinate synthetase, found in Methylibium petroleiphilum (strain ATCC BAA-1232 / LMG 22953 / PM1).